We begin with the raw amino-acid sequence, 64 residues long: Alpha-conotoxin GI (64 aa).

The first 21 residues, 1 to 21 (MGMRMMFTVFLLVVLATTVVS), serve as a signal peptide directing secretion. Residues 22–49 (FPSERASDGRDDTAKDEGSDMDKLVEKK) constitute a propeptide that is removed on maturation. 2 disulfide bridges follow: C51-C56 and C52-C62. C62 carries the post-translational modification Cysteine amide.

The protein belongs to the conotoxin A superfamily. In terms of processing, not hydroxylated; hydroxylation, on a synthetic hydroxylated GI, improves its folding but impairs its activity against target receptors. As to expression, expressed by the venom duct.

The protein localises to the secreted. Alpha-conotoxins act on postsynaptic membranes, they bind to the nicotinic acetylcholine receptors (nAChR) and thus inhibit them. Reversibly inhibits mammalian muscle nAChR (IC(50)=339 nM on adult subtype (alpha-1-beta-1-gamma-delta/CHRNA1-CHRNB1-CHRNG-CHRND) and IC(50)=5.86-995 nM on fetal subtype (alpha-1-beta-1-delta-epsilon/CHRNA1-CHRNB1-CHRND-CHRNE)). The higher affinity site is the alpha/delta site on mouse muscle-derived BC3H-1 receptor, and the other site (alpha/gamma site) on nicotinic receptors from Torpedo californica electric organ. The polypeptide is Alpha-conotoxin GI (Conus geographus (Geography cone)).